The sequence spans 502 residues: Aspartyl/glutamyl-tRNA(Asn/Gln) amidotransferase subunit B (502 aa).

It belongs to the GatB/GatE family. GatB subfamily. As to quaternary structure, heterotrimer of A, B and C subunits.

The enzyme catalyses L-glutamyl-tRNA(Gln) + L-glutamine + ATP + H2O = L-glutaminyl-tRNA(Gln) + L-glutamate + ADP + phosphate + H(+). It catalyses the reaction L-aspartyl-tRNA(Asn) + L-glutamine + ATP + H2O = L-asparaginyl-tRNA(Asn) + L-glutamate + ADP + phosphate + 2 H(+). Allows the formation of correctly charged Asn-tRNA(Asn) or Gln-tRNA(Gln) through the transamidation of misacylated Asp-tRNA(Asn) or Glu-tRNA(Gln) in organisms which lack either or both of asparaginyl-tRNA or glutaminyl-tRNA synthetases. The reaction takes place in the presence of glutamine and ATP through an activated phospho-Asp-tRNA(Asn) or phospho-Glu-tRNA(Gln). This chain is Aspartyl/glutamyl-tRNA(Asn/Gln) amidotransferase subunit B, found in Pseudarthrobacter chlorophenolicus (strain ATCC 700700 / DSM 12829 / CIP 107037 / JCM 12360 / KCTC 9906 / NCIMB 13794 / A6) (Arthrobacter chlorophenolicus).